The primary structure comprises 524 residues: G1/S-specific cyclin-E (524 aa).

A disordered region spans residues 1 to 155 (MAGRKSSRTA…EESHEMVRLE (155 aa)). The segment covering 18-47 (KPERKSAILSPHDELRERLLETAIDMKENI) has biased composition (basic and acidic residues). The span at 48 to 62 (PQRNTRNSSVGSQKS) shows a compositional bias: polar residues. 3 stretches are compositionally biased toward basic and acidic residues: residues 63–78 (DCSETRKRRSTKEGPA), 86–95 (KHRNGSREDS), and 146–155 (EESHEMVRLE).

Belongs to the cyclin family. Cyclin E subfamily. As to quaternary structure, interacts with a member of the CDK2/CDK protein kinases to form a serine/threonine kinase holoenzyme complex. The cyclin subunit imparts substrate specificity to the complex. In terms of tissue distribution, expressed dynamically in proliferating cells throughout development. Detectable in larval blast cells undergoing active proliferation that give rise to all tissue types, including germline, intestine, hypodermis, neurons, and muscle.

The protein resides in the nucleus. It is found in the cytoplasm. Its subcellular location is the cytoskeleton. It localises to the microtubule organizing center. The protein localises to the centrosome. The protein resides in the centriole. Functionally, essential for the control of the cell cycle at the G1/S (start) transition. In association with cdk-2, regulates proliferation, quiescent state and cell fate during the development of several cell lineages. In the embryo, initiates the establishment of cell polarity through the recruitment of the centrosomal proteins spd-2 and spd-5 during prophase. During the development of the vulva, controls the onset of vulval cell terminal differentiation by controlling the duration of G1 phase. During hypoderm development at early larval stages, controls syncytial fate of seam cell daughter cells. Involved in the progression of cell division in the intestinal lineage in larvae, and in particular in endoreplication, a specific growth pathway in the intestinal epithelium, required for feeding and gut development in growing larvae. By controlling the activity of translational repressor gld-1, regulates the pool of germline stem cells and the size of the mitotic zone by preventing entry into meiosis. In addition, repression of expression by gld-1 prevents mitosis re-entry in meiotic germline cells. This Caenorhabditis elegans protein is G1/S-specific cyclin-E.